The following is a 513-amino-acid chain: MGHNGSWVSPNTSHPRNTSGAQAGANSSAFGELSEAQLYRQFTTTVQVVIFIGSLLGNFTVLWSTCRTTVFKSVTNRFIKNLACSGICASVVCVPFDIILSTSPHCCWWIYTMLFCKVLKFLHKVFCSVTVLSFPAIALDRYYSVLYPLERKISDAKSRELVMYIWAHAVVASVPVFAVTNVADIYATSTCTEVWSNSLGHLVYVLIYNVTTVIVPVAVVFLFLILIRRALSASQKKKVIIAALRTPQNTISIPYASQREAELHATLLSMVTVFILCSVPYATLVVYQTVLNVPNTSVFLLLTAIWLPKVSLLANPVLFLTVNRSVRKCLVGTLVQLHHRYSRRNVVSTGSGVVEPSLEPSMRSGSQLLEMFHIGQQQIFKPSEDEEESEAKYLGSTDFQAKEVLTSSPEGEESQLAPSVPPPGTVDSVSRVSPVAPVEPGIFPDKYSLQFGFGPFELPPQWLSETRNSKKRLLPPLGNTPEELIQTKVPRVSRVERKMSRNNKVSIFPKVDS.

The tract at residues 1–25 (MGHNGSWVSPNTSHPRNTSGAQAGA) is disordered. Residues 1-41 (MGHNGSWVSPNTSHPRNTSGAQAGANSSAFGELSEAQLYRQ) lie on the Extracellular side of the membrane. N-linked (GlcNAc...) asparagine glycans are attached at residues Asn-4, Asn-11, Asn-17, and Asn-26. The chain crosses the membrane as a helical span at residues 42-64 (FTTTVQVVIFIGSLLGNFTVLWS). The Cytoplasmic portion of the chain corresponds to 65–77 (TCRTTVFKSVTNR). Residues 78 to 98 (FIKNLACSGICASVVCVPFDI) traverse the membrane as a helical segment. At 99–108 (ILSTSPHCCW) the chain is on the extracellular side. The helical transmembrane segment at 109–129 (WIYTMLFCKVLKFLHKVFCSV) threads the bilayer. Residues 130–157 (TVLSFPAIALDRYYSVLYPLERKISDAK) lie on the Cytoplasmic side of the membrane. A helical transmembrane segment spans residues 158–177 (SRELVMYIWAHAVVASVPVF). At 178-204 (AVTNVADIYATSTCTEVWSNSLGHLVY) the chain is on the extracellular side. Residues 205–225 (VLIYNVTTVIVPVAVVFLFLI) traverse the membrane as a helical segment. At 226–264 (LIRRALSASQKKKVIIAALRTPQNTISIPYASQREAELH) the chain is on the cytoplasmic side. A helical membrane pass occupies residues 265-285 (ATLLSMVTVFILCSVPYATLV). At 286-301 (VYQTVLNVPNTSVFLL) the chain is on the extracellular side. A helical membrane pass occupies residues 302 to 322 (LTAIWLPKVSLLANPVLFLTV). At 323–513 (NRSVRKCLVG…KVSIFPKVDS (191 aa)) the chain is on the cytoplasmic side. The segment at 404 to 432 (VLTSSPEGEESQLAPSVPPPGTVDSVSRV) is disordered.

The protein belongs to the G-protein coupled receptor 1 family. In terms of tissue distribution, expressed in brain, lung, heart, stomach, intestine, cultured aortic smooth muscle cells and cardiac myocytes.

The protein resides in the cell membrane. Functionally, orphan receptor involved in normal circadian rhythm behavior. Acts through the G-protein subclass G(z)-alpha and has an agonist-independent basal activity to repress cAMP production. This is Probable G-protein coupled receptor 176 (Gpr176) from Rattus norvegicus (Rat).